We begin with the raw amino-acid sequence, 124 residues long: NADH dehydrogenase [ubiquinone] 1 alpha subcomplex subunit 6 (124 aa).

It belongs to the complex I LYR family.

It is found in the mitochondrion inner membrane. Accessory subunit of the mitochondrial membrane respiratory chain NADH dehydrogenase (Complex I), that is believed to be not involved in catalysis. Complex I functions in the transfer of electrons from NADH to the respiratory chain. The immediate electron acceptor for the enzyme is believed to be ubiquinone. This is NADH dehydrogenase [ubiquinone] 1 alpha subcomplex subunit 6 (ndufa6) from Dictyostelium discoideum (Social amoeba).